We begin with the raw amino-acid sequence, 423 residues long: Imidazolonepropionase (423 aa).

Residues histidine 87 and histidine 89 each contribute to the Fe(3+) site. 2 residues coordinate Zn(2+): histidine 87 and histidine 89. Residues arginine 96, tyrosine 159, and histidine 192 each coordinate 4-imidazolone-5-propanoate. N-formimidoyl-L-glutamate is bound at residue tyrosine 159. Histidine 257 is a Fe(3+) binding site. Histidine 257 is a Zn(2+) binding site. Glutamate 260 provides a ligand contact to 4-imidazolone-5-propanoate. Aspartate 331 serves as a coordination point for Fe(3+). Aspartate 331 is a Zn(2+) binding site. Residues asparagine 333 and glycine 335 each coordinate N-formimidoyl-L-glutamate. Serine 336 contacts 4-imidazolone-5-propanoate.

This sequence belongs to the metallo-dependent hydrolases superfamily. HutI family. Zn(2+) serves as cofactor. Fe(3+) is required as a cofactor.

Its subcellular location is the cytoplasm. It carries out the reaction 4-imidazolone-5-propanoate + H2O = N-formimidoyl-L-glutamate. It participates in amino-acid degradation; L-histidine degradation into L-glutamate; N-formimidoyl-L-glutamate from L-histidine: step 3/3. Its function is as follows. Catalyzes the hydrolytic cleavage of the carbon-nitrogen bond in imidazolone-5-propanoate to yield N-formimidoyl-L-glutamate. It is the third step in the universal histidine degradation pathway. In Porphyromonas gingivalis (strain ATCC 33277 / DSM 20709 / CIP 103683 / JCM 12257 / NCTC 11834 / 2561), this protein is Imidazolonepropionase.